A 125-amino-acid chain; its full sequence is Small ribosomal subunit protein uS13 (125 aa).

Residues 95 to 125 (GLPVRGQRTKNNCRTRKGKRKTVANKKKATK) are disordered.

Belongs to the universal ribosomal protein uS13 family. Part of the 30S ribosomal subunit. Forms a loose heterodimer with protein S19. Forms two bridges to the 50S subunit in the 70S ribosome.

Functionally, located at the top of the head of the 30S subunit, it contacts several helices of the 16S rRNA. In the 70S ribosome it contacts the 23S rRNA (bridge B1a) and protein L5 of the 50S subunit (bridge B1b), connecting the 2 subunits; these bridges are implicated in subunit movement. Contacts the tRNAs in the A and P-sites. The sequence is that of Small ribosomal subunit protein uS13 from Cytophaga hutchinsonii (strain ATCC 33406 / DSM 1761 / CIP 103989 / NBRC 15051 / NCIMB 9469 / D465).